Consider the following 2325-residue polypeptide: Otogelin-like protein (2325 aa).

A signal peptide spans 1-22 (MVPWRALSLPILLVSLRGYVCA). The region spanning 112 to 288 (GICKTWGQYH…VLTPDDTKCV (177 aa)) is the VWFD 1 domain. Disulfide bonds link Cys114-Cys248 and Cys136-Cys287. An N-linked (GlcNAc...) asparagine glycan is attached at Asn425. In terms of domain architecture, VWFD 2 spans 472–645 (VQCSVVGDSH…HAWRVSSTCF (174 aa)). Disulfide bonds link Cys474/Cys609, Cys496/Cys644, and Cys518/Cys526. One can recognise a TIL 1 domain in the interval 736–791 (CQKGMLYHHCSSLCLRSCTSLSSPEQCKDDCAEGCNCPEGKFYEETLNFCVPIYHC). 2 N-linked (GlcNAc...) asparagine glycosylation sites follow: Asn817 and Asn867. In terms of domain architecture, VWFD 3 spans 937 to 1114 (AVCTVYGDRH…DLMEALKPCE (178 aa)). 3 disulfides stabilise this stretch: Cys939-Cys1069, Cys961-Cys1113, and Cys983-Cys990. The N-linked (GlcNAc...) asparagine glycan is linked to Asn1280. In terms of domain architecture, TIL 2 spans 1366–1418 (RYEPCATPCFKTCSDPEALACTFLPPVEGCLPYCPKNMILDETTLKCVHPEDC). Positions 1506 to 1695 (CRCSMLSELS…SWEIEKSFEV (190 aa)) constitute a VWFD 4 domain. 2 disulfides stabilise this stretch: Cys1508–Cys1655 and Cys1549–Cys1571. N-linked (GlcNAc...) asparagine glycans are attached at residues Asn1576 and Asn2170. 4 disulfides stabilise this stretch: Cys2233/Cys2289, Cys2254/Cys2303, Cys2265/Cys2320, and Cys2269/Cys2322. Positions 2233-2325 (CKREERICQK…EPIDCTCQWN (93 aa)) constitute a CTCK domain. N-linked (GlcNAc...) asparagine glycosylation occurs at Asn2296.

The protein belongs to the otogelin family.

It localises to the secreted. The polypeptide is Otogelin-like protein (Otogl) (Mus musculus (Mouse)).